Here is a 1102-residue protein sequence, read N- to C-terminus: WASH complex subunit 4 (1102 aa).

The protein belongs to the SWIP family. Component of the WASH complex.

The protein resides in the early endosome. Acts at least in part as component of the WASH complex which may regulate wash nucleation-promoting factor (NPF) activity and is required for its membrane targeting during endosomal sorting. During embryogenesis, not involved in the wash-dependent developmental migration of hemocytes anteriorly from the tail. The polypeptide is WASH complex subunit 4 (Drosophila melanogaster (Fruit fly)).